The following is a 180-amino-acid chain: MANRLKEKYTNEVIPALSEKFNYTTVMAVPKVEKIVLNMGVGDAVSNAKNLEKAAAELELISGQKPLITKAKKSIAGFRLREGVAIGAKVTLRGERMYEFLDKLVTVSLPRVRDFHGVPTKSFDGRGNYTLGVKEQLIFPEINFDDVDKVRGLDIVIVTTANTDEESRELLKGLGMPFAK.

Belongs to the universal ribosomal protein uL5 family. In terms of assembly, part of the 50S ribosomal subunit; part of the 5S rRNA/L5/L18/L25 subcomplex. Contacts the 5S rRNA and the P site tRNA. Forms a bridge to the 30S subunit in the 70S ribosome.

Its function is as follows. This is one of the proteins that bind and probably mediate the attachment of the 5S RNA into the large ribosomal subunit, where it forms part of the central protuberance. In the 70S ribosome it contacts protein S13 of the 30S subunit (bridge B1b), connecting the 2 subunits; this bridge is implicated in subunit movement. Contacts the P site tRNA; the 5S rRNA and some of its associated proteins might help stabilize positioning of ribosome-bound tRNAs. The polypeptide is Large ribosomal subunit protein uL5 (Streptococcus uberis (strain ATCC BAA-854 / 0140J)).